Reading from the N-terminus, the 317-residue chain is Olfactory receptor 51Q1 (317 aa).

Over 1 to 27 the chain is Extracellular; sequence MSQVTNTTQEGIYFILTDIPGFEASHI. The N-linked (GlcNAc...) asparagine glycan is linked to asparagine 6. A helical transmembrane segment spans residues 28–48; it reads WISIPVCCLYTISIMGNTTIL. Over 49 to 56 the chain is Cytoplasmic; the sequence is TVIRTEPS. Residues 57 to 77 traverse the membrane as a helical segment; sequence VHQRMYLFLSMLALTDLGLTL. The Extracellular segment spans residues 78-101; it reads TTLPTVMQLLWFNVRRISSEACFA. Cysteine 99 and cysteine 191 form a disulfide bridge. Residues 102–122 form a helical membrane-spanning segment; sequence QFFFLHGFSFMESSVLLAMSV. Residues 123–141 are Cytoplasmic-facing; that stretch reads DCYVAICCPLHYASILTNE. A helical membrane pass occupies residues 142-162; the sequence is VIGRTGLAIICCCVLAVLPSL. Residues 163 to 198 lie on the Extracellular side of the membrane; it reads FLLKRLPFCHSHLLSRSYCLHQDMIRLVCADIRLNS. A helical transmembrane segment spans residues 199–219; it reads WYGFALALLIIIVDPLLIVIS. The Cytoplasmic portion of the chain corresponds to 220-239; that stretch reads YTLILKNILGTATWAERLRA. The chain crosses the membrane as a helical span at residues 240-260; it reads LNNCLSHILAVLVLYIPMVGV. The Extracellular portion of the chain corresponds to 261–275; it reads SMTHRFAKHASPLVH. A helical transmembrane segment spans residues 276-296; sequence VIMANIYLLAPPVMNPIIYSV. At 297–317 the chain is on the cytoplasmic side; that stretch reads KNKQIQWGMLNFLSLKNMHSR.

It belongs to the G-protein coupled receptor 1 family.

It localises to the cell membrane. Functionally, odorant receptor. This chain is Olfactory receptor 51Q1 (OR51Q1), found in Homo sapiens (Human).